The chain runs to 610 residues: Serine/threonine-protein kinase VRK1 (610 aa).

The Protein kinase domain occupies 32 to 384; the sequence is FIVGKQFATG…PRKRTTRKAV (353 aa). ATP contacts are provided by residues 38–46 and K61; that span reads FATGGFGRI. D167 acts as the Proton acceptor in catalysis. Disordered stretches follow at residues 317-476, 498-530, 544-577, and 590-610; these read IQKT…NKVA, ISVASDKSPTTSTPSSSSGLRSKRKSSEDVGEG, KKAKTKSGISSATKASPTELRRVPGVRNFPKGRR, and ERLASRQTKPTFDDSSCSSEV. Basic and acidic residues predominate over residues 352 to 373; sequence AVKEESDNKDNDEVEVKPEKKA. Residues 388 to 397 are compositionally biased toward acidic residues; sequence NDSDDNEEQY. Over residues 447-458 the composition is skewed to low complexity; it reads TTPSSAASTSRS. Residues 465–474 show a composition bias toward polar residues; that stretch reads LTSSTASSNK. Positions 502-517 are enriched in low complexity; sequence SDKSPTTSTPSSSSGL. Polar residues-rich tracts occupy residues 550–559 and 594–610; these read SGISSATKAS and SRQTKPTFDDSSCSSEV.

It belongs to the protein kinase superfamily. CK1 Ser/Thr protein kinase family. VRK subfamily. Post-translationally, autophosphorylates in vitro. In terms of tissue distribution, present in germ cells at all stages of progression from the mitotic zone to mature oocytes, but not in maturing spermatids (at the protein level). Expressed in the ventral nerve cord and vulva cells.

The protein localises to the nucleus. Its subcellular location is the cytoplasm. It localises to the cajal body. It catalyses the reaction L-seryl-[protein] + ATP = O-phospho-L-seryl-[protein] + ADP + H(+). It carries out the reaction L-threonyl-[protein] + ATP = O-phospho-L-threonyl-[protein] + ADP + H(+). Its function is as follows. Serine/threonine kinase that phosphorylates baf-1, thus regulating the association of baf-1 with chromatin and nuclear membrane proteins during nuclear envelope formation. May act through the egl-17 signaling pathway. Essential in hermaphrodites for formation of the vulva, uterus, and uterine seam cells and for development and maintenance of the somatic gonad and thus the germ line. Acts to prevent cep-1 from triggering an inappropriate cell cycle arrest, thereby promoting germ cell proliferation. Regulates anchor cell polarity and the timing of anchor cell invasion through the basement membranes separating vulval and somatic gonadal cells during the L3 larval stage. The polypeptide is Serine/threonine-protein kinase VRK1 (Caenorhabditis elegans).